The following is a 218-amino-acid chain: Adenylate kinase (218 aa).

11-16 (GAGKGT) is an ATP binding site. The NMP stretch occupies residues 31–60 (STGDMFREAMANKTKVGLEAKSYIDKGNLV). Residues Thr32, Arg37, 58 to 60 (NLV), 86 to 89 (GFPR), and Gln93 contribute to the AMP site. The interval 127–165 (ARYMCKNCGATYNKLSKQPKVEGTCDRCGSHEFYQREDD) is LID. Arg128 contacts ATP. Zn(2+) contacts are provided by Cys131 and Cys134. 137-138 (TY) contributes to the ATP binding site. Zn(2+) is bound by residues Cys151 and Cys154. Positions 162 and 173 each coordinate AMP. Gln201 is an ATP binding site.

The protein belongs to the adenylate kinase family. As to quaternary structure, monomer.

It localises to the cytoplasm. It carries out the reaction AMP + ATP = 2 ADP. It functions in the pathway purine metabolism; AMP biosynthesis via salvage pathway; AMP from ADP: step 1/1. Functionally, catalyzes the reversible transfer of the terminal phosphate group between ATP and AMP. Plays an important role in cellular energy homeostasis and in adenine nucleotide metabolism. This is Adenylate kinase from Lactobacillus helveticus (strain DPC 4571).